Reading from the N-terminus, the 238-residue chain is Orotidine 5'-phosphate decarboxylase (238 aa).

Substrate is bound by residues D10, K32, 59-68 (DLKLHDIPNT), T122, R184, Q193, G213, and R214. The active-site Proton donor is K61.

The protein belongs to the OMP decarboxylase family. Type 1 subfamily. In terms of assembly, homodimer.

The catalysed reaction is orotidine 5'-phosphate + H(+) = UMP + CO2. It functions in the pathway pyrimidine metabolism; UMP biosynthesis via de novo pathway; UMP from orotate: step 2/2. In terms of biological role, catalyzes the decarboxylation of orotidine 5'-monophosphate (OMP) to uridine 5'-monophosphate (UMP). The sequence is that of Orotidine 5'-phosphate decarboxylase from Bacillus thuringiensis subsp. konkukian (strain 97-27).